A 227-amino-acid chain; its full sequence is Esterase OVCA2 (227 aa).

Active-site charge relay system residues include Ser-119, Asp-179, and His-206.

The protein belongs to the LovG family.

It carries out the reaction a carboxylic ester + H2O = an alcohol + a carboxylate + H(+). In terms of biological role, exhibits ester hydrolase activity with a strong preference for long-chain alkyl ester substrates and high selectivity against a variety of short, branched, and substituted esters. Is able to hydrolyze ester bonds within a wide range of p-nitrophenyl derivatives (C2-C14) in vitro, with a strong preference toward substrates of &gt;8 carbons. In Bos taurus (Bovine), this protein is Esterase OVCA2 (OVCA2).